Reading from the N-terminus, the 119-residue chain is Fluoride-specific ion channel FluC (119 aa).

3 helical membrane-spanning segments follow: residues Leu-37–Val-54, Leu-61–Thr-83, and Ala-93–Leu-112. The Na(+) site is built by Gly-69 and Thr-72.

It belongs to the fluoride channel Fluc/FEX (TC 1.A.43) family.

Its subcellular location is the cell inner membrane. It catalyses the reaction fluoride(in) = fluoride(out). Its activity is regulated as follows. Na(+) is not transported, but it plays an essential structural role and its presence is essential for fluoride channel function. Functionally, fluoride-specific ion channel. Important for reducing fluoride concentration in the cell, thus reducing its toxicity. In Neisseria meningitidis serogroup C (strain 053442), this protein is Fluoride-specific ion channel FluC.